Here is a 283-residue protein sequence, read N- to C-terminus: 4-hydroxy-3-methylbut-2-enyl diphosphate reductase (283 aa).

Cys12 serves as a coordination point for [4Fe-4S] cluster. (2E)-4-hydroxy-3-methylbut-2-enyl diphosphate is bound by residues His40 and His72. Dimethylallyl diphosphate is bound by residues His40 and His72. Residues His40 and His72 each coordinate isopentenyl diphosphate. [4Fe-4S] cluster is bound at residue Cys94. His122 lines the (2E)-4-hydroxy-3-methylbut-2-enyl diphosphate pocket. A dimethylallyl diphosphate-binding site is contributed by His122. His122 contacts isopentenyl diphosphate. Residue Glu124 is the Proton donor of the active site. Thr160 is a (2E)-4-hydroxy-3-methylbut-2-enyl diphosphate binding site. A [4Fe-4S] cluster-binding site is contributed by Cys188. Positions 216, 218, and 259 each coordinate (2E)-4-hydroxy-3-methylbut-2-enyl diphosphate. 3 residues coordinate dimethylallyl diphosphate: Ser216, Asn218, and Ser259. Ser216, Asn218, and Ser259 together coordinate isopentenyl diphosphate.

The protein belongs to the IspH family. [4Fe-4S] cluster is required as a cofactor.

The enzyme catalyses isopentenyl diphosphate + 2 oxidized [2Fe-2S]-[ferredoxin] + H2O = (2E)-4-hydroxy-3-methylbut-2-enyl diphosphate + 2 reduced [2Fe-2S]-[ferredoxin] + 2 H(+). It catalyses the reaction dimethylallyl diphosphate + 2 oxidized [2Fe-2S]-[ferredoxin] + H2O = (2E)-4-hydroxy-3-methylbut-2-enyl diphosphate + 2 reduced [2Fe-2S]-[ferredoxin] + 2 H(+). It participates in isoprenoid biosynthesis; dimethylallyl diphosphate biosynthesis; dimethylallyl diphosphate from (2E)-4-hydroxy-3-methylbutenyl diphosphate: step 1/1. It functions in the pathway isoprenoid biosynthesis; isopentenyl diphosphate biosynthesis via DXP pathway; isopentenyl diphosphate from 1-deoxy-D-xylulose 5-phosphate: step 6/6. Its function is as follows. Catalyzes the conversion of 1-hydroxy-2-methyl-2-(E)-butenyl 4-diphosphate (HMBPP) into a mixture of isopentenyl diphosphate (IPP) and dimethylallyl diphosphate (DMAPP). Acts in the terminal step of the DOXP/MEP pathway for isoprenoid precursor biosynthesis. This Dictyoglomus thermophilum (strain ATCC 35947 / DSM 3960 / H-6-12) protein is 4-hydroxy-3-methylbut-2-enyl diphosphate reductase.